Reading from the N-terminus, the 167-residue chain is MTRILGIDPGSRVTGYGIVDDGRPTRLVTEGTLRLPRQAGLAERLGRIFDGLAELIAEHRPQEVALEQVFVHRNADTALKLGHARGAALTACVQAGLPVAEYAPARIKQAIAGSGRADKTQVGYMVRALLRLRTSPAEDAADALAAALCHAHHRSAPLTAATTGARR.

Catalysis depends on residues D8, E67, and D139. Residues D8, E67, and D139 each contribute to the Mg(2+) site.

This sequence belongs to the RuvC family. In terms of assembly, homodimer which binds Holliday junction (HJ) DNA. The HJ becomes 2-fold symmetrical on binding to RuvC with unstacked arms; it has a different conformation from HJ DNA in complex with RuvA. In the full resolvosome a probable DNA-RuvA(4)-RuvB(12)-RuvC(2) complex forms which resolves the HJ. Mg(2+) is required as a cofactor.

The protein resides in the cytoplasm. The enzyme catalyses Endonucleolytic cleavage at a junction such as a reciprocal single-stranded crossover between two homologous DNA duplexes (Holliday junction).. The RuvA-RuvB-RuvC complex processes Holliday junction (HJ) DNA during genetic recombination and DNA repair. Endonuclease that resolves HJ intermediates. Cleaves cruciform DNA by making single-stranded nicks across the HJ at symmetrical positions within the homologous arms, yielding a 5'-phosphate and a 3'-hydroxyl group; requires a central core of homology in the junction. The consensus cleavage sequence is 5'-(A/T)TT(C/G)-3'. Cleavage occurs on the 3'-side of the TT dinucleotide at the point of strand exchange. HJ branch migration catalyzed by RuvA-RuvB allows RuvC to scan DNA until it finds its consensus sequence, where it cleaves and resolves the cruciform DNA. The chain is Crossover junction endodeoxyribonuclease RuvC from Halorhodospira halophila (strain DSM 244 / SL1) (Ectothiorhodospira halophila (strain DSM 244 / SL1)).